Here is a 244-residue protein sequence, read N- to C-terminus: MPLYSEGFITVRSIPKGKSAQMSMVQSVKMVLAPPHPAARPFLIGGVAVALVGLFLSHWIVWLGVAFTLFCLFFFRDPERVPPGRTGLALAPADGHVVSVAPAVPPPELGLGDTPRWRVATFLSVLDVHVNRMPVDGTVTKIAYRPGKFVNASLDKASEDNERNALAIRMPDGRTVAVVQIAGLIARRILCDAREGDVVNAGARFGIIRFGSRTDMYLPEGVVPLVTEGQTMIGGETVIADLTP.

Serine 212 acts as the Schiff-base intermediate with substrate; via pyruvic acid in catalysis. Serine 212 is modified (pyruvic acid (Ser); by autocatalysis).

Belongs to the phosphatidylserine decarboxylase family. PSD-A subfamily. Heterodimer of a large membrane-associated beta subunit and a small pyruvoyl-containing alpha subunit. Pyruvate serves as cofactor. In terms of processing, is synthesized initially as an inactive proenzyme. Formation of the active enzyme involves a self-maturation process in which the active site pyruvoyl group is generated from an internal serine residue via an autocatalytic post-translational modification. Two non-identical subunits are generated from the proenzyme in this reaction, and the pyruvate is formed at the N-terminus of the alpha chain, which is derived from the carboxyl end of the proenzyme. The post-translation cleavage follows an unusual pathway, termed non-hydrolytic serinolysis, in which the side chain hydroxyl group of the serine supplies its oxygen atom to form the C-terminus of the beta chain, while the remainder of the serine residue undergoes an oxidative deamination to produce ammonia and the pyruvoyl prosthetic group on the alpha chain.

The protein resides in the cell membrane. The catalysed reaction is a 1,2-diacyl-sn-glycero-3-phospho-L-serine + H(+) = a 1,2-diacyl-sn-glycero-3-phosphoethanolamine + CO2. It participates in phospholipid metabolism; phosphatidylethanolamine biosynthesis; phosphatidylethanolamine from CDP-diacylglycerol: step 2/2. In terms of biological role, catalyzes the formation of phosphatidylethanolamine (PtdEtn) from phosphatidylserine (PtdSer). This Granulibacter bethesdensis (strain ATCC BAA-1260 / CGDNIH1) protein is Phosphatidylserine decarboxylase proenzyme.